A 230-amino-acid chain; its full sequence is Antiholin-like protein LrgB (230 aa).

The next 8 helical transmembrane spans lie at 5-25 (MTPYFGIVVSLIAYGIGTLLF), 30-50 (GFFLFTPLFVAMVLGIVFLKV), 61-81 (GGKMISFFLEPATIAFAIPLY), 92-112 (WQILSAIVVGSICSVVVVYIV), 126-146 (MLPQAATTAIALPISESIGGI), 149-169 (ITSFAVIFNAVIVYALGALFL), 177-197 (PIAKGLALGTAGHALGVAVGI), and 209-229 (IAVTVVGVVTVVVIPMFMPFI).

Belongs to the CidB/LrgB family. LrgB subfamily.

It is found in the cell membrane. Inhibits the expression or activity of extracellular murein hydrolases by interacting, possibly with LrgA, with the holin-like protein CidA. The LrgAB and CidA proteins may affect the proton motive force of the membrane. May be involved in programmed cell death (PCD), possibly triggering PCD in response to antibiotics and environmental stresses. This chain is Antiholin-like protein LrgB, found in Bacillus mycoides (strain KBAB4) (Bacillus weihenstephanensis).